The following is a 176-amino-acid chain: Ferritin, middle subunit (176 aa).

Residues 7-156 (QNYHSDCEAA…DFITNLKRLG (150 aa)) enclose the Ferritin-like diiron domain. 6 residues coordinate Fe cation: Glu24, Glu59, His62, Glu104, Gln138, and Asp141.

The protein belongs to the ferritin family. As to quaternary structure, oligomer of 24 subunits. The functional molecule is roughly spherical and contains a central cavity into which the polymeric mineral iron core is deposited.

The catalysed reaction is 4 Fe(2+) + O2 + 4 H(+) = 4 Fe(3+) + 2 H2O. In terms of biological role, stores iron in a soluble, non-toxic, readily available form. Important for iron homeostasis. Has ferroxidase activity. Iron is taken up in the ferrous form and deposited as ferric hydroxides after oxidation. This is Ferritin, middle subunit from Aquarana catesbeiana (American bullfrog).